Reading from the N-terminus, the 145-residue chain is Ribonuclease H (145 aa).

Residues 1–141 enclose the RNase H type-1 domain; that stretch reads MQEVTIYSDG…ADALANRGVE (141 aa). Residues Asp-9, Glu-47, Asp-69, and Asp-133 each coordinate Mg(2+).

The protein belongs to the RNase H family. In terms of assembly, monomer. Requires Mg(2+) as cofactor.

The protein resides in the cytoplasm. The enzyme catalyses Endonucleolytic cleavage to 5'-phosphomonoester.. In terms of biological role, endonuclease that specifically degrades the RNA of RNA-DNA hybrids. The polypeptide is Ribonuclease H (Cupriavidus necator (strain ATCC 17699 / DSM 428 / KCTC 22496 / NCIMB 10442 / H16 / Stanier 337) (Ralstonia eutropha)).